The sequence spans 177 residues: uncharacterized protein (177 aa).

This is an uncharacterized protein from Acanthamoeba polyphaga (Amoeba).